We begin with the raw amino-acid sequence, 243 residues long: Ubiquinone/menaquinone biosynthesis C-methyltransferase UbiE (243 aa).

S-adenosyl-L-methionine-binding positions include T69, D90, and 116-117 (DA).

This sequence belongs to the class I-like SAM-binding methyltransferase superfamily. MenG/UbiE family.

The enzyme catalyses a 2-demethylmenaquinol + S-adenosyl-L-methionine = a menaquinol + S-adenosyl-L-homocysteine + H(+). The catalysed reaction is a 2-methoxy-6-(all-trans-polyprenyl)benzene-1,4-diol + S-adenosyl-L-methionine = a 5-methoxy-2-methyl-3-(all-trans-polyprenyl)benzene-1,4-diol + S-adenosyl-L-homocysteine + H(+). It participates in quinol/quinone metabolism; menaquinone biosynthesis; menaquinol from 1,4-dihydroxy-2-naphthoate: step 2/2. The protein operates within cofactor biosynthesis; ubiquinone biosynthesis. Its function is as follows. Methyltransferase required for the conversion of demethylmenaquinol (DMKH2) to menaquinol (MKH2) and the conversion of 2-polyprenyl-6-methoxy-1,4-benzoquinol (DDMQH2) to 2-polyprenyl-3-methyl-6-methoxy-1,4-benzoquinol (DMQH2). The chain is Ubiquinone/menaquinone biosynthesis C-methyltransferase UbiE from Burkholderia cenocepacia (strain HI2424).